A 126-amino-acid polypeptide reads, in one-letter code: Topoisomerase I damage affected protein 8 (126 aa).

Residues M1–G110 form the PA14 domain.

It belongs to the flocculin family.

The chain is Topoisomerase I damage affected protein 8 (TDA8) from Saccharomyces cerevisiae (strain ATCC 204508 / S288c) (Baker's yeast).